The primary structure comprises 113 residues: Protein S100-A9 (113 aa).

A2 carries the post-translational modification N-acetylalanine. EF-hand domains are found at residues 13 to 48 (ISTIINVFHQYSRKYGHPDTLNKAEFKEMVNKDLPN) and 55 to 90 (RNENLLRDIMEDLDTNQDNQLSFEECMMLMGKLIFA). H21 is a Zn(2+) binding site. Positions 24 and 29 each coordinate Ca(2+). D31 serves as a coordination point for Zn(2+). 7 residues coordinate Ca(2+): T32, E37, D68, N70, D72, Q74, and E79. Zn(2+) is bound by residues H92 and H96. H107 carries the pros-methylhistidine modification.

Homodimer. Preferentially exists as a heterodimer or heterotetramer with S100A8 known as calprotectin (S100A8/A9). S100A9 interacts with ATP2A2. S100A9 interacts with AGER, and with the heterodimeric complex formed by TLR4 and LY96 in the presence of calcium and/or zinc ions. S100A9 binds quinoline-3-carboxamides in the presence of calcium and/or zinc ions. S100A9 interacts with amyloid-beta protein 40. Calprotectin (S100A8/9) interacts with CEACAM3 and tubulin filaments in a calcium-dependent manner. Heterotetrameric calprotectin (S100A8/A9) interacts with ANXA6 and associates with tubulin filaments in activated monocytes. Calprotectin (S100A8/9) interacts with NCF2/P67PHOX, RAC1, RAC2, CYBA and CYBB. Calprotectin (S100A8/9) interacts with NOS2 to form the iNOS-S100A8/A9 transnitrosylase complex; induced by LDL(ox). Calprotectin (S100A8/9) interacts with CD69. Phosphorylated. Phosphorylation inhibits activation of tubulin polymerization. Post-translationally, methylation at His-107 by METTL9 reduces zinc-binding without affecting heterodimerization with S100A8. As to expression, highly expressed at sites of inflammation.

Its subcellular location is the secreted. The protein localises to the cytoplasm. It is found in the cytoskeleton. It localises to the cell membrane. S100A9 is a calcium- and zinc-binding protein which plays a prominent role in the regulation of inflammatory processes and immune response. It can induce neutrophil chemotaxis, adhesion, can increase the bactericidal activity of neutrophils by promoting phagocytosis via activation of SYK, PI3K/AKT, and ERK1/2 and can induce degranulation of neutrophils by a MAPK-dependent mechanism. Predominantly found as calprotectin (S100A8/A9) which has a wide plethora of intra- and extracellular functions. The intracellular functions include: facilitating leukocyte arachidonic acid trafficking and metabolism, modulation of the tubulin-dependent cytoskeleton during migration of phagocytes and activation of the neutrophilic NADPH-oxidase. Also participates in regulatory T-cell differentiation together with CD69. Activates NADPH-oxidase by facilitating the enzyme complex assembly at the cell membrane, transferring arachidonic acid, an essential cofactor, to the enzyme complex and S100A8 contributes to the enzyme assembly by directly binding to NCF2/P67PHOX. The extracellular functions involve pro-inflammatory, antimicrobial, oxidant-scavenging and apoptosis-inducing activities. Its pro-inflammatory activity includes recruitment of leukocytes, promotion of cytokine and chemokine production, and regulation of leukocyte adhesion and migration. Acts as an alarmin or a danger associated molecular pattern (DAMP) molecule and stimulates innate immune cells via binding to pattern recognition receptors such as Toll-like receptor 4 (TLR4) and receptor for advanced glycation endproducts (AGER). Binding to TLR4 and AGER activates the MAP-kinase and NF-kappa-B signaling pathways resulting in the amplification of the pro-inflammatory cascade. Has antimicrobial activity towards bacteria and fungi and exerts its antimicrobial activity probably via chelation of Zn(2+) which is essential for microbial growth. Can induce cell death via autophagy and apoptosis and this occurs through the cross-talk of mitochondria and lysosomes via reactive oxygen species (ROS) and the process involves BNIP3. Can regulate neutrophil number and apoptosis by an anti-apoptotic effect; regulates cell survival via ITGAM/ITGB and TLR4 and a signaling mechanism involving MEK-ERK. Its role as an oxidant scavenger has a protective role in preventing exaggerated tissue damage by scavenging oxidants. The iNOS-S100A8/A9 transnitrosylase complex is proposed to direct selective inflammatory stimulus-dependent S-nitrosylation of multiple targets such as GAPDH, NXA5, EZR, MSN and VIM by recognizing a [IL]-x-C-x-x-[DE] motif. The polypeptide is Protein S100-A9 (S100a9) (Rattus norvegicus (Rat)).